The chain runs to 317 residues: Inactive serine protease 45 (317 aa).

The signal sequence occupies residues 1–35 (MATSLRGLDAGPGSLRRWILICFAALLLLPPRPNL). The N-linked (GlcNAc...) asparagine glycan is linked to Asn-40. Positions 44 to 291 (PVCGTPWWPD…YTIWIKDQVS (248 aa)) constitute a Peptidase S1 domain. Cys-75 and Cys-91 are joined by a disulfide. N-linked (GlcNAc...) asparagine glycosylation occurs at Asn-110. 3 disulfide bridges follow: Cys-172-Cys-249, Cys-207-Cys-230, and Cys-239-Cys-267. A glycan (N-linked (GlcNAc...) asparagine) is linked at Asn-272.

This sequence belongs to the peptidase S1 family.

The protein localises to the secreted. The polypeptide is Inactive serine protease 45 (Mus musculus (Mouse)).